We begin with the raw amino-acid sequence, 277 residues long: 4-hydroxy-3-prenylphenylpyruvate oxygenase/4-hydroxy-3-prenylbenzoate synthase (277 aa).

It belongs to the aldolase class II family. In terms of assembly, homotetramer. It depends on Fe(2+) as a cofactor.

It catalyses the reaction 3-dimethylallyl-4-hydroxyphenylpyruvate + O2 = 3-dimethylallyl-4-hydroxymandelate + CO2. The catalysed reaction is 3-dimethylallyl-4-hydroxymandelate + O2 = 3-dimethylallyl-4-hydroxybenzoate + CO2 + H2O. Its pathway is antibiotic biosynthesis. With respect to regulation, activated by ascorbate. Functionally, involved in the biosynthesis of ring A of the aminocoumarin antibiotic clorobiocin. Catalyzes two consecutive oxidative decarboxylations of 3-dimethylallyl-4-hydroxyphenylpyruvate (3DMA-4HPP) to yield 3-dimethylallyl-4-hydroxybenzoate (3DMA-4HB) via the 3-dimethylallyl-4-hydroxymandelic acid (3DMA-4HMA) intermediate. The chain is 4-hydroxy-3-prenylphenylpyruvate oxygenase/4-hydroxy-3-prenylbenzoate synthase from Streptomyces roseochromogenus subsp. oscitans.